The sequence spans 224 residues: MANSGLQLLGYFLALGGWVGIIASTALPQWKQSSYAGDAIITAVGLYEGLWMSCASQSTGQVQCKLYDSLLALDGHIQSARALMVVAVLLGFVAMVLSVVGMKCTRVGDSNPTAKSRVAISGGALFLLAGLCTLTAVSWYATLVTQEFFNPSTPVNARYEFGPALFVGWASAGLAMLGGSFLCCTCPEPERANSIPQPYRSGPSTAAREPVVKLPASVKGPLGV.

The Cytoplasmic portion of the chain corresponds to 1–7 (MANSGLQ). A helical transmembrane segment spans residues 8-28 (LLGYFLALGGWVGIIASTALP). At 29–81 (QWKQSSYAGDAIITAVGLYEGLWMSCASQSTGQVQCKLYDSLLALDGHIQSAR) the chain is on the extracellular side. C54 and C64 are disulfide-bonded. A helical transmembrane segment spans residues 82-102 (ALMVVAVLLGFVAMVLSVVGM). The Cytoplasmic portion of the chain corresponds to 103 to 117 (KCTRVGDSNPTAKSR). A helical transmembrane segment spans residues 118–138 (VAISGGALFLLAGLCTLTAVS). Over 139–160 (WYATLVTQEFFNPSTPVNARYE) the chain is Extracellular. Residues 161–181 (FGPALFVGWASAGLAMLGGSF) form a helical membrane-spanning segment. Residues 182–224 (LCCTCPEPERANSIPQPYRSGPSTAAREPVVKLPASVKGPLGV) are Cytoplasmic-facing.

It belongs to the claudin family. In terms of assembly, can form homo- and heteropolymeric tight junction strands. Interacts with other claudins including CLDN3, CLDN10, CLDN16 and CLDN18 with highest affinity for CLDN16. Interacts (via PDZ-binding motif TRV) with TJP1 (via PDZ domain). As to quaternary structure, (Microbial infection) Interacts (via both extracellular domains) with Clostridium perfringens enterotoxin CPE; the interaction disrupts claudin assembly in tight junctions. In terms of tissue distribution, expressed in the corticomedullary axis of the TAL, specifically in the cortex and the outer stripe of outer medulla (OSOM) zone (at protein level). Expressed in peripheral nervous system, in Schwan cells (at protein level).

It is found in the cell junction. It localises to the tight junction. The protein resides in the cell membrane. It catalyses the reaction Mg(2+)(in) = Mg(2+)(out). The catalysed reaction is Ca(2+)(in) = Ca(2+)(out). It carries out the reaction Na(+)(in) = Na(+)(out). The enzyme catalyses K(+)(in) = K(+)(out). It catalyses the reaction Rb(+)(in) = Rb(+)(out). The catalysed reaction is Cs(+)(in) = Cs(+)(out). It carries out the reaction Li(+)(in) = Li(+)(out). Functionally, forms paracellular channels: coassembles with CLDN16 into tight junction strands with cation-selective channels through the strands, conveying epithelial permeability in a process known as paracellular tight junction permeability. Involved in the maintenance of ion gradients along the nephron. In the thick ascending limb (TAL) of Henle's loop, facilitates sodium paracellular permeability from the interstitial compartment to the lumen, contributing to the lumen-positive transepithelial potential that drives paracellular magnesium and calcium reabsorption. Forms paracellular barriers on its own. In the peripheral nervous system, represents a major constituent of the tight junctions in Schwann cells and contributes to electrical sealing. During retinal neurogenesis, may regulate the barrier properties of tight junctions in retinal pigment epithelium, required for proper retinal tissue differentiation and vision. This chain is Claudin-19, found in Mus musculus (Mouse).